Consider the following 281-residue polypeptide: Aminoglycoside N(3)-acetyltransferase IX (281 aa).

This sequence belongs to the antibiotic N-acetyltransferase family.

The enzyme catalyses a 2-deoxystreptamine antibiotic + acetyl-CoA = an N(3)-acetyl-2-deoxystreptamine antibiotic + CoA + H(+). Functionally, resistance to neomycin. This Micromonospora chalcea protein is Aminoglycoside N(3)-acetyltransferase IX (aacC9).